The chain runs to 76 residues: Small ribosomal subunit protein bS18 (76 aa).

It belongs to the bacterial ribosomal protein bS18 family. Part of the 30S ribosomal subunit. Forms a tight heterodimer with protein bS6.

Functionally, binds as a heterodimer with protein bS6 to the central domain of the 16S rRNA, where it helps stabilize the platform of the 30S subunit. The sequence is that of Small ribosomal subunit protein bS18 from Nitrosomonas europaea (strain ATCC 19718 / CIP 103999 / KCTC 2705 / NBRC 14298).